The chain runs to 343 residues: Methionine import ATP-binding protein MetN (343 aa).

The ABC transporter domain maps to 2–241; the sequence is IKLSNITKVF…PKTPLAQKFI (240 aa). 38 to 45 lines the ATP pocket; sequence GASGAGKS.

Belongs to the ABC transporter superfamily. Methionine importer (TC 3.A.1.24) family. The complex is composed of two ATP-binding proteins (MetN), two transmembrane proteins (MetI) and a solute-binding protein (MetQ).

It is found in the cell inner membrane. The catalysed reaction is L-methionine(out) + ATP + H2O = L-methionine(in) + ADP + phosphate + H(+). The enzyme catalyses D-methionine(out) + ATP + H2O = D-methionine(in) + ADP + phosphate + H(+). Functionally, part of the ABC transporter complex MetNIQ involved in methionine import. Responsible for energy coupling to the transport system. The polypeptide is Methionine import ATP-binding protein MetN (Shigella boydii serotype 4 (strain Sb227)).